We begin with the raw amino-acid sequence, 706 residues long: Transmembrane 9 superfamily member 3 (706 aa).

The first 33 residues, 1 to 33 (MRVRPKRSVITLMAIVVVMLILRNQFYSSRTRG), serve as a signal peptide directing secretion. The Lumenal portion of the chain corresponds to 34–290 (HGQEPVISSS…LSDEQSIQFH (257 aa)). The chain crosses the membrane as a helical span at residues 291 to 311 (WMSLANSVGIVLSISFITLII). Over 312-371 (YVRVMYTDKSNSKSPKYMINIEGIETEDDLDDDKYGKYSVYTVAKDWIQNGRPNLFGLKV) the chain is Cytoplasmic. The chain crosses the membrane as a helical span at residues 372-392 (LILLVSFGVQFLFTIIGSLTI). At 393-405 (SCSMNKLHNVRNS) the chain is on the lumenal side. The chain crosses the membrane as a helical span at residues 406–426 (VLTMAILFFVLGAFMASFVGT). Over 427 to 456 (RLSMVTKTKRTKANYLDDNRYLKDYKKFSP) the chain is Cytoplasmic. The chain crosses the membrane as a helical span at residues 457-477 (IFTILCGSSLPGIVMVSTFLL). Residues 478–494 (NSIVWAHDSTSALPFKT) are Lumenal-facing. A helical transmembrane segment spans residues 495 to 515 (IVFFMSIYFIVCIPLSLFGGI). The Cytoplasmic segment spans residues 516–553 (VANNIPLPQYWLSGITKDESNSDGNGLFVPKSRAKFNP). The chain crosses the membrane as a helical span at residues 554 to 574 (LVYCGIYLCGIFPLLVIYVEM). At 575–592 (QYVYKSLWLEKTTFYYFY) the chain is on the lumenal side. A helical membrane pass occupies residues 593 to 613 (GFLFLSIILLCVLTMEISIIG). At 614–637 (SYLLMRFCFEDKVVRNNWRWKCFE) the chain is on the cytoplasmic side. The chain crosses the membrane as a helical span at residues 638 to 658 (MGFSGGVYMELYSLYYIFAVL). The Lumenal portion of the chain corresponds to 659-665 (NIHGFSS). A helical membrane pass occupies residues 666 to 686 (ILISICYSLIFNVMCSLGLGA). Residues 687–706 (LSYLTASWFINKIYHQKVNL) are Cytoplasmic-facing.

The protein belongs to the nonaspanin (TM9SF) (TC 9.A.2) family.

It localises to the golgi apparatus membrane. In terms of biological role, with EMP70 and TMN2, plays a critical role in the late stages of a nutrient-controlled pathway notably regulating FLO11 gene expression. Acts downstream of RAS2 and TOR. Essential for cell adhesion and filamentous growth. May play a role as effector of cellular copper homeostasis. The protein is Transmembrane 9 superfamily member 3 (TMN3) of Saccharomyces cerevisiae (strain ATCC 204508 / S288c) (Baker's yeast).